The primary structure comprises 232 residues: Acetate--CoA ligase [ADP-forming] I subunit beta (232 aa).

The 37-residue stretch at 27–63 folds into the ATP-grasp domain; that stretch reads KEILKLYGIPVPEFKVARNEEEAVKFSGEIGYPVVMK. Residue 53 to 64 participates in ATP binding; the sequence is SGEIGYPVVMKI.

The protein belongs to the acetate CoA ligase beta subunit family. As to quaternary structure, heterotetramer of two alpha and two beta subunits.

It localises to the cytoplasm. It catalyses the reaction acetate + ATP + CoA = acetyl-CoA + ADP + phosphate. With respect to regulation, activity is dependent on magnesium. Catalyzes the reversible formation of acetate and ATP from acetyl-CoA by using ADP and phosphate. Can use other substrates such as isobutyryl-CoA, propionyl-CoA and butyryl-CoA, but not indoleacetyl-CoA, phenylacetyl-CoA or succinyl-CoA. Seems to be involved primarily in the conversion of acetyl-CoA to acetate. Participates in the degradation of branched-chain amino acids via branched-chain-acyl-CoA esters. This Pyrococcus furiosus (strain ATCC 43587 / DSM 3638 / JCM 8422 / Vc1) protein is Acetate--CoA ligase [ADP-forming] I subunit beta.